Reading from the N-terminus, the 602-residue chain is Leucine-rich repeat-containing protein 40 (602 aa).

The tract at residues 1 to 20 (MSRLKRIAGQDPRAGFKAAG) is disordered. Residue serine 71 is modified to Phosphoserine. 20 LRR repeats span residues 83-104 (DLTK…LRLL), 106-127 (ALTV…MREL), 129-150 (NLQK…ITNL), 152-173 (NLKC…FEQL), 175-196 (NLED…FSSL), 198-219 (SLVR…INRM), 221-242 (RLKH…LAGM), 244-265 (SLEL…PSCS), 266-286 (LLKE…EHLK), 290-311 (SILV…IILL), 313-335 (SLER…GNLH), 336-356 (LKFL…IINK), 400-421 (TLKI…VFNA), 426-447 (IITS…MVEL), 450-471 (MVSD…LCML), 473-494 (KLTF…MESL), 496-517 (RLQT…LYRI), 519-540 (TLET…KMKM), 543-564 (NLTT…LGNC), and 566-586 (NLRT…AILI).

The polypeptide is Leucine-rich repeat-containing protein 40 (LRRC40) (Macaca fascicularis (Crab-eating macaque)).